Reading from the N-terminus, the 199-residue chain is UPF0637 protein YsbB (199 aa).

It belongs to the UPF0637 family.

The protein is UPF0637 protein YsbB (ysbB) of Lactococcus lactis subsp. lactis (strain IL1403) (Streptococcus lactis).